We begin with the raw amino-acid sequence, 169 residues long: Menaquinol:cytochrome c reductase iron-sulfur subunit (169 aa).

Residues 62-160 form the Rieske domain; it reads EPKRFDFKVK…FEVKDGKLYL (99 aa). 4 residues coordinate [2Fe-2S] cluster: C102, H104, C123, and H126. Cysteines 107 and 125 form a disulfide.

It belongs to the Rieske iron-sulfur protein family. As to quaternary structure, the main subunits of the menaquinol:cytochrome c complex are a Rieske-type iron-sulfur protein (QcrA), a cytochrome b (QcrB) and a cytochrome c (QcrC). Requires [2Fe-2S] cluster as cofactor.

In terms of biological role, component of the menaquinol:cytochrome c reductase complex. The Rieske protein is a high potential 2Fe-2S protein. In Geobacillus thermodenitrificans, this protein is Menaquinol:cytochrome c reductase iron-sulfur subunit (qcrA).